The following is a 449-amino-acid chain: Phosphoglucosamine mutase (449 aa).

Residue S100 is the Phosphoserine intermediate of the active site. S100, D241, D243, and D245 together coordinate Mg(2+). Position 100 is a phosphoserine (S100).

Belongs to the phosphohexose mutase family. It depends on Mg(2+) as a cofactor. In terms of processing, activated by phosphorylation.

It catalyses the reaction alpha-D-glucosamine 1-phosphate = D-glucosamine 6-phosphate. Catalyzes the conversion of glucosamine-6-phosphate to glucosamine-1-phosphate. This is Phosphoglucosamine mutase from Clostridium kluyveri (strain NBRC 12016).